The primary structure comprises 355 residues: GPN-loop GTPase 1 (355 aa).

The interval 1-30 (MAEKAENLPSSSAEASEEPSPQTGPNVNQK) is disordered. Low complexity predominate over residues 9–21 (PSSSAEASEEPSP). GTP is bound at residue 40–45 (GSGKTT). A Gly-Pro-Asn (GPN)-loop; involved in dimer interface motif is present at residues 97–99 (GPN). 200 to 203 (NKAD) contacts GTP. Residues 286–311 (EKVLAEKKLLDEEERKKRDEETLKGK) are a coiled coil.

The protein belongs to the GPN-loop GTPase family. Heterodimer with GPN3. Binds to RNA polymerase II (RNAPII).

The protein localises to the cytoplasm. The protein resides in the nucleus. Functionally, small GTPase required for proper nuclear import of RNA polymerase II (RNAPII). May act at an RNAP assembly step prior to nuclear import. In Caenorhabditis elegans, this protein is GPN-loop GTPase 1.